The primary structure comprises 674 residues: tRNA wybutosine-synthesizing protein 4 (674 aa).

Residues arginine 84, glycine 109, aspartate 140, 184-185 (DL), and glutamate 212 contribute to the S-adenosyl-L-methionine site.

Belongs to the methyltransferase superfamily. LCMT family.

The catalysed reaction is 7-[(3S)-3-amino-3-carboxypropyl]wyosine(37) in tRNA(Phe) + S-adenosyl-L-methionine = 7-[(3S)-(3-amino-3-methoxycarbonyl)propyl]wyosine(37) in tRNA(Phe) + S-adenosyl-L-homocysteine. It catalyses the reaction 7-[(3S)-(3-amino-3-methoxycarbonyl)propyl]wyosine(37) in tRNA(Phe) + S-adenosyl-L-methionine + CO2 = wybutosine(37) in tRNA(Phe) + S-adenosyl-L-homocysteine + 2 H(+). It participates in tRNA modification; wybutosine-tRNA(Phe) biosynthesis. In terms of biological role, probable S-adenosyl-L-methionine-dependent methyltransferase that acts as a component of the wybutosine biosynthesis pathway. Wybutosine is a hyper modified guanosine with a tricyclic base found at the 3'-position adjacent to the anticodon of eukaryotic phenylalanine tRNA. May methylate the carboxyl group of leucine residues to form alpha-leucine ester residues. In Candida glabrata (strain ATCC 2001 / BCRC 20586 / JCM 3761 / NBRC 0622 / NRRL Y-65 / CBS 138) (Yeast), this protein is tRNA wybutosine-synthesizing protein 4 (PPM2).